We begin with the raw amino-acid sequence, 295 residues long: Ribosomal protein L11 methyltransferase (295 aa).

4 residues coordinate S-adenosyl-L-methionine: Thr-146, Gly-167, Asp-189, and Asn-231.

The protein belongs to the methyltransferase superfamily. PrmA family.

It is found in the cytoplasm. It carries out the reaction L-lysyl-[protein] + 3 S-adenosyl-L-methionine = N(6),N(6),N(6)-trimethyl-L-lysyl-[protein] + 3 S-adenosyl-L-homocysteine + 3 H(+). In terms of biological role, methylates ribosomal protein L11. The sequence is that of Ribosomal protein L11 methyltransferase from Vibrio vulnificus (strain YJ016).